The chain runs to 296 residues: Stanniocalcin-2 (296 aa).

The first 24 residues, 1-24 (MCAERLGQFVTLALVFATLDPARG), serve as a signal peptide directing secretion. The tract at residues 22–44 (ARGTDSTNPPEGPQDRGSQQKGR) is disordered. N-linked (GlcNAc...) asparagine glycosylation occurs at N73. The disordered stretch occupies residues 236-296 (RPYHRDTDHH…EQSEYSDIRR (61 aa)). Positions 238-258 (YHRDTDHHLTANRGAKGERGS) are enriched in basic and acidic residues.

This sequence belongs to the stanniocalcin family. Homodimer; disulfide-linked. In terms of tissue distribution, expressed in a variety of tissues. Strongly expressed in ovary and to a lesser extent in kidney.

The protein localises to the secreted. Functionally, has an anti-hypocalcemic action on calcium and phosphate homeostasis. The sequence is that of Stanniocalcin-2 (Stc2) from Rattus norvegicus (Rat).